A 232-amino-acid chain; its full sequence is Small ribosomal subunit protein uS3 (232 aa).

A KH type-2 domain is found at 39-107 (VRQFLIKELA…PAQINIAEVR (69 aa)).

The protein belongs to the universal ribosomal protein uS3 family. Part of the 30S ribosomal subunit. Forms a tight complex with proteins S10 and S14.

Binds the lower part of the 30S subunit head. Binds mRNA in the 70S ribosome, positioning it for translation. This Serratia proteamaculans (strain 568) protein is Small ribosomal subunit protein uS3.